The primary structure comprises 408 residues: Echinulin prenyltransferase 2 (408 aa).

Dimethylallyl diphosphate-binding residues include arginine 94, lysine 181, tyrosine 183, arginine 248, lysine 250, tyrosine 252, glutamine 334, tyrosine 336, tyrosine 400, and tyrosine 404.

Belongs to the tryptophan dimethylallyltransferase family.

The catalysed reaction is preechinulin + dimethylallyl diphosphate = tardioxopiperazine B + diphosphate. The enzyme catalyses preechinulin + dimethylallyl diphosphate = tardioxopiperazine A + diphosphate. It carries out the reaction tardioxopiperazine A + dimethylallyl diphosphate = echinulin + diphosphate. It catalyses the reaction tardioxopiperazine A + dimethylallyl diphosphate = variecolorin L + diphosphate. The catalysed reaction is neoechinulin A + dimethylallyl diphosphate = variecolorin G + diphosphate. The enzyme catalyses neoechinulin A + dimethylallyl diphosphate = isoechinulin A + diphosphate. It carries out the reaction isoechinulin A + dimethylallyl diphosphate = dehydroechinulin + diphosphate. It catalyses the reaction neoechinulin B + dimethylallyl diphosphate = isoechinulin B + diphosphate. It functions in the pathway secondary metabolite biosynthesis. The protein operates within alkaloid biosynthesis. Its function is as follows. Prenyltransferase; part of the gene cluster that mediates the biosynthesis of echinulin family alkaloid. The pathway begins with the biosynthesis of the cyclic dipeptide cyclo-L-Trp-L-Ala (cyclo-TA) by the NRPS echPS via condensation of L-alanine and L-tryptophan. The prenyltransferase echPT1 then catalyzes the first prenylation step, a reverse prenylation reaction at C2, to yield preechinulin. Preechinulin is the substrate of the cytochrome P450 monooxygenase echP450 that catalyzes the formation of the double bond between C10 and C11 to produce neoechulin A. The unique prenyltransferase echPT2 functions as a competitive enzyme with echP450 for preechinulin metabolization and uses preechinulin for effective regiospecific prenylations. Preechinulin is prenylated by echPT2 at C5 or C7. C7-prenylation leads to accumulation of tardioxopiperazine B without further modification by echPT2. In contrast, the C5-prenylated tardioxopiperazine A can be prenylated again by echPT2, predominantly at C7 to form echinulin or less frequently at C4 to give variecolorin L. EchPT2 also accepts neoechilunin A to produce varlecolorin G (prenylation at C5) or isoechinulin A (prenylation at C7). EchPT2 further converts isoechinulin A into dehydroechinulin. Moreover, a yet unidentified enzyme can also convert neoechilunin A into neoechilunin B by introducing a double bond between positions C14 and C17 and thus provides a further substrate to echPT2 for C5 and C7 prenylation. The sequence is that of Echinulin prenyltransferase 2 from Aspergillus ruber (Eurotium rubrum).